A 482-amino-acid polypeptide reads, in one-letter code: NAD(+) hydrolase ThsA (482 aa).

Residues 3–281 (EHEQKIMIDR…EEITKRFRCK (279 aa)) form the Deacetylase sirtuin-type domain. The NAD(+) site is built by Asp-112 and His-150. His-150 serves as the catalytic Proton acceptor. Positions 282 to 482 (NVFLSGSAHE…SKIHDVIKLI (201 aa)) are SLOG (STALD) domain. 3'cADPR contacts are provided by Gly-287, Ser-288, Leu-324, Phe-355, Arg-373, Lys-390, Gly-407, and Glu-411.

The protein belongs to the soluble Thoeris ThsA family. Homotetramer in solution.

The enzyme catalyses NAD(+) + H2O = ADP-D-ribose + nicotinamide + H(+). In vivo probably activated by a cyclic ADP-D-ribose generated by ThsB (might be 3'cADPR). NAD(+) hydrolyzing component (NADase) of the Thoeris antiviral defense system, composed of ThsA and ThsB (maybe J591_1492). As purified, has NADase activity that is not activated by any tested cADPR isomers; binds 3'cADPR better than 2'cADPR. It was suggested the purified protein is already in a fully active state. Upon activation binds and hydrolyzes NAD(+), leading to cell death and inhibition of phage replication. This Acinetobacter baumannii (strain 532279) protein is NAD(+) hydrolase ThsA.